The chain runs to 408 residues: CinA-like protein (408 aa).

This sequence belongs to the CinA family.

This Thermotoga sp. (strain RQ2) protein is CinA-like protein.